A 170-amino-acid polypeptide reads, in one-letter code: 6,7-dimethyl-8-ribityllumazine synthase (170 aa).

5-amino-6-(D-ribitylamino)uracil-binding positions include tryptophan 25, 57-59, and 79-81; these read AVE and AVI. 84–85 contacts (2S)-2-hydroxy-3-oxobutyl phosphate; it reads DT. The active-site Proton donor is histidine 87. Asparagine 112 lines the 5-amino-6-(D-ribitylamino)uracil pocket. (2S)-2-hydroxy-3-oxobutyl phosphate is bound at residue arginine 126.

This sequence belongs to the DMRL synthase family.

It carries out the reaction (2S)-2-hydroxy-3-oxobutyl phosphate + 5-amino-6-(D-ribitylamino)uracil = 6,7-dimethyl-8-(1-D-ribityl)lumazine + phosphate + 2 H2O + H(+). Its pathway is cofactor biosynthesis; riboflavin biosynthesis; riboflavin from 2-hydroxy-3-oxobutyl phosphate and 5-amino-6-(D-ribitylamino)uracil: step 1/2. In terms of biological role, catalyzes the formation of 6,7-dimethyl-8-ribityllumazine by condensation of 5-amino-6-(D-ribitylamino)uracil with 3,4-dihydroxy-2-butanone 4-phosphate. This is the penultimate step in the biosynthesis of riboflavin. In Thermobifida fusca (strain YX), this protein is 6,7-dimethyl-8-ribityllumazine synthase.